Here is a 133-residue protein sequence, read N- to C-terminus: Cytidine deaminase (133 aa).

Residues 4 to 126 form the CMP/dCMP-type deaminase domain; the sequence is VDWNMLRGNA…DLLPDAFGLD (123 aa). 45–47 provides a ligand contact to substrate; it reads NVE. Cys56 is a binding site for Zn(2+). Residue Glu58 is the Proton donor of the active site. Zn(2+) is bound by residues Cys89 and Cys92.

This sequence belongs to the cytidine and deoxycytidylate deaminase family. As to quaternary structure, homotetramer. Zn(2+) is required as a cofactor.

The enzyme catalyses cytidine + H2O + H(+) = uridine + NH4(+). The catalysed reaction is 2'-deoxycytidine + H2O + H(+) = 2'-deoxyuridine + NH4(+). In terms of biological role, recycles cytidine and 2-deoxycytidine for uridine and 2-deoxyuridine synthesis, respectively. Catalyzes the hydrolytic deamination of cytidine and 2-deoxycytidine to form, respectively, uridine and 2-deoxyuridine. The protein is Cytidine deaminase (cdd) of Mycobacterium tuberculosis (strain CDC 1551 / Oshkosh).